Consider the following 314-residue polypeptide: R2-like ligand binding oxidase (314 aa).

3 residues coordinate Mn(2+): glutamate 68, glutamate 101, and histidine 104. A cross-link (3-(O4'-tyrosyl)-valine (Val-Tyr)) is located at residues 71-162 (VTEDIQPFMS…AAQVRASVTY (92 aa)). Glutamate 101 is a binding site for Fe cation. Fe cation is bound by residues glutamate 167, glutamate 202, and histidine 205.

Belongs to the ribonucleoside diphosphate reductase small chain family. R2-like ligand binding oxidase subfamily. In terms of assembly, homodimer. Fe cation serves as cofactor. Requires Mn(2+) as cofactor.

Functionally, probable oxidase that might be involved in lipid metabolism. The chain is R2-like ligand binding oxidase from Mycobacterium tuberculosis (strain ATCC 25177 / H37Ra).